A 550-amino-acid polypeptide reads, in one-letter code: Chaperonin GroEL 2 (550 aa).

ATP-binding positions include 30 to 33 (TLGP), Lys-51, 87 to 91 (DGTTT), Gly-415, 480 to 482 (NAA), and Asp-496.

The protein belongs to the chaperonin (HSP60) family. In terms of assembly, forms a cylinder of 14 subunits composed of two heptameric rings stacked back-to-back. Interacts with the co-chaperonin GroES.

The protein resides in the cytoplasm. The enzyme catalyses ATP + H2O + a folded polypeptide = ADP + phosphate + an unfolded polypeptide.. Functionally, together with its co-chaperonin GroES, plays an essential role in assisting protein folding. The GroEL-GroES system forms a nano-cage that allows encapsulation of the non-native substrate proteins and provides a physical environment optimized to promote and accelerate protein folding. The polypeptide is Chaperonin GroEL 2 (Erythrobacter litoralis (strain HTCC2594)).